A 383-amino-acid chain; its full sequence is MEAVHFGAGNIGRGFIGETLAANGFKINFVDVNETIINALNQRGEYTITLAAPGEKKIHVDNVDGLNNAKDPEAVVKAIAQADLVTTAIGPKILPIIAPLIAQGLQARDAANNHQALDVIACENMIGGSQSLKKSVYEHLDDAGKTFADTYVGFPNAAVDRIVPQQKHDDPLAVSVEDFKEWVVDESQMKNKDLKLKTVDYVPDLEPYIERKLFSVNTGHATTAYTGKYLGYTTIGDAIKDPKVFNQAKGALAETRSLLLSEFKNFDEKDLENYQNRVLQRFQNPYISDDISRVARTPIRKLGYDERFIRPIRELKERGLNYSVLMDTVGMMFHYVEPNDAEAVKLQAMLKDQPLVDVIKEVTGLKDAGLIDEVEASVKSKDR.

3 to 14 serves as a coordination point for NAD(+); sequence AVHFGAGNIGRG.

Belongs to the mannitol dehydrogenase family.

The enzyme catalyses D-mannitol 1-phosphate + NAD(+) = beta-D-fructose 6-phosphate + NADH + H(+). This chain is Mannitol-1-phosphate 5-dehydrogenase, found in Lacticaseibacillus casei (strain BL23) (Lactobacillus casei).